The primary structure comprises 397 residues: Tryptophan synthase beta chain (397 aa).

K87 is subject to N6-(pyridoxal phosphate)lysine.

It belongs to the TrpB family. Tetramer of two alpha and two beta chains. The cofactor is pyridoxal 5'-phosphate.

It catalyses the reaction (1S,2R)-1-C-(indol-3-yl)glycerol 3-phosphate + L-serine = D-glyceraldehyde 3-phosphate + L-tryptophan + H2O. It functions in the pathway amino-acid biosynthesis; L-tryptophan biosynthesis; L-tryptophan from chorismate: step 5/5. Functionally, the beta subunit is responsible for the synthesis of L-tryptophan from indole and L-serine. The chain is Tryptophan synthase beta chain from Escherichia coli O157:H7.